The following is a 123-amino-acid chain: Ribosome-binding factor A (123 aa).

Belongs to the RbfA family. Monomer. Binds 30S ribosomal subunits, but not 50S ribosomal subunits or 70S ribosomes.

The protein localises to the cytoplasm. Functionally, one of several proteins that assist in the late maturation steps of the functional core of the 30S ribosomal subunit. Associates with free 30S ribosomal subunits (but not with 30S subunits that are part of 70S ribosomes or polysomes). Required for efficient processing of 16S rRNA. May interact with the 5'-terminal helix region of 16S rRNA. This is Ribosome-binding factor A from Cupriavidus taiwanensis (strain DSM 17343 / BCRC 17206 / CCUG 44338 / CIP 107171 / LMG 19424 / R1) (Ralstonia taiwanensis (strain LMG 19424)).